We begin with the raw amino-acid sequence, 134 residues long: Profilin-5 (134 aa).

A disulfide bridge connects residues Cys13 and Cys118. The Involved in PIP2 interaction signature appears at 84–100 (AVIRGKKGSGGITIKKT). Thr114 is subject to Phosphothreonine.

The protein belongs to the profilin family. Occurs in many kinds of cells as a complex with monomeric actin in a 1:1 ratio. In terms of processing, phosphorylated by MAP kinases.

It localises to the cytoplasm. Its subcellular location is the cytoskeleton. Binds to actin and affects the structure of the cytoskeleton. At high concentrations, profilin prevents the polymerization of actin, whereas it enhances it at low concentrations. This is Profilin-5 from Olea europaea (Common olive).